A 192-amino-acid chain; its full sequence is MAHGPRYKLAFRRRREGKTDYRARYKMVETGKSRLVVRITTYHVIAQIINVGMNGDETLVSAHSKQLQKMGWLGGTSNTAAAYLTGYLCGKRALKEGIEEAVLDIGLRPAIRGSKVFAALKGAVDAGLNVPHGESVLPDESRIRGEHIMEYAESLDEEELRKRFSKYLERGLSPVDLPEHFDEIKKRIDEEV.

It belongs to the universal ribosomal protein uL18 family. As to quaternary structure, part of the 50S ribosomal subunit. Contacts the 5S and 23S rRNAs.

Functionally, this is one of the proteins that bind and probably mediate the attachment of the 5S RNA into the large ribosomal subunit, where it forms part of the central protuberance. The sequence is that of Large ribosomal subunit protein uL18 from Methanothermobacter thermautotrophicus (strain ATCC 29096 / DSM 1053 / JCM 10044 / NBRC 100330 / Delta H) (Methanobacterium thermoautotrophicum).